The primary structure comprises 361 residues: RuBisCO accumulation factor 1 (361 aa).

Residues 16–197 (NELAQELLRK…RKQIEQLLVD (182 aa)) are N-terminal alpha-helix. The tract at residues 221 to 347 (PRIVPVVGQL…VIILVRPRRI (127 aa)) is C-terminal beta-sheet.

It belongs to the RAF family. As to quaternary structure, homodimer. Forms an RbcL(8)-Raf1(8) complex. Each Raf1 dimer clamps the exterior of an RbcL dimer, protecting it. The extreme C-terminus (residues 354-361) inserts into the catalytic pocket of RbcL where the Glu-361 forms a salt bridge with 'Lys-202'. This insertion probably contributes to the assembly of RbcL(8). Forms complexes of many stoichiometries with RbcL with and without RbcS. RbcX and Raf1 can bind simultaneously to RbcL.

Its subcellular location is the cytoplasm. In terms of biological role, a major RuBisCO chaperone. Acts after GroEL-GroES chaperonin to fold and/or assemble the large subunit of RuBisCO (ccbL, rbcL). Cooperates with RbcX in RbcL folding, plays the major role in assembly of dimers into RbcL(8)-Raf1(8) intermediate complexes. RbcS replaces Raf1, leading to holoenzyme formation. Its function is as follows. In vitro acts as an antagonist to CcmM35, suggesting it might regulate RuBisCO condensation and decondensation. This is RuBisCO accumulation factor 1 from Nostoc sp. (strain PCC 7120 / SAG 25.82 / UTEX 2576).